The chain runs to 363 residues: Chorismate synthase (363 aa).

2 residues coordinate NADP(+): Arg48 and Arg54. FMN contacts are provided by residues 125 to 127 (RSS), 237 to 238 (NA), Gly277, 292 to 296 (KPTSS), and Arg318.

It belongs to the chorismate synthase family. In terms of assembly, homotetramer. Requires FMNH2 as cofactor.

It carries out the reaction 5-O-(1-carboxyvinyl)-3-phosphoshikimate = chorismate + phosphate. It participates in metabolic intermediate biosynthesis; chorismate biosynthesis; chorismate from D-erythrose 4-phosphate and phosphoenolpyruvate: step 7/7. In terms of biological role, catalyzes the anti-1,4-elimination of the C-3 phosphate and the C-6 proR hydrogen from 5-enolpyruvylshikimate-3-phosphate (EPSP) to yield chorismate, which is the branch point compound that serves as the starting substrate for the three terminal pathways of aromatic amino acid biosynthesis. This reaction introduces a second double bond into the aromatic ring system. The protein is Chorismate synthase of Pseudomonas putida (strain GB-1).